A 284-amino-acid chain; its full sequence is ATP phosphoribosyltransferase (284 aa).

This sequence belongs to the ATP phosphoribosyltransferase family. Long subfamily. Mg(2+) serves as cofactor.

The protein localises to the cytoplasm. The enzyme catalyses 1-(5-phospho-beta-D-ribosyl)-ATP + diphosphate = 5-phospho-alpha-D-ribose 1-diphosphate + ATP. It functions in the pathway amino-acid biosynthesis; L-histidine biosynthesis; L-histidine from 5-phospho-alpha-D-ribose 1-diphosphate: step 1/9. Its activity is regulated as follows. Feedback inhibited by histidine. Its function is as follows. Catalyzes the condensation of ATP and 5-phosphoribose 1-diphosphate to form N'-(5'-phosphoribosyl)-ATP (PR-ATP). Has a crucial role in the pathway because the rate of histidine biosynthesis seems to be controlled primarily by regulation of HisG enzymatic activity. This Pseudarthrobacter chlorophenolicus (strain ATCC 700700 / DSM 12829 / CIP 107037 / JCM 12360 / KCTC 9906 / NCIMB 13794 / A6) (Arthrobacter chlorophenolicus) protein is ATP phosphoribosyltransferase.